The chain runs to 273 residues: Acetyl-coenzyme A carboxylase carboxyl transferase subunit alpha (273 aa).

The CoA carboxyltransferase C-terminal domain maps to Met-1–Glu-244.

This sequence belongs to the AccA family. In terms of assembly, acetyl-CoA carboxylase is a heterohexamer composed of biotin carboxyl carrier protein (AccB), biotin carboxylase (AccC) and two subunits each of ACCase subunit alpha (AccA) and ACCase subunit beta (AccD).

Its subcellular location is the cytoplasm. The catalysed reaction is N(6)-carboxybiotinyl-L-lysyl-[protein] + acetyl-CoA = N(6)-biotinyl-L-lysyl-[protein] + malonyl-CoA. Its pathway is lipid metabolism; malonyl-CoA biosynthesis; malonyl-CoA from acetyl-CoA: step 1/1. Component of the acetyl coenzyme A carboxylase (ACC) complex. First, biotin carboxylase catalyzes the carboxylation of biotin on its carrier protein (BCCP) and then the CO(2) group is transferred by the carboxyltransferase to acetyl-CoA to form malonyl-CoA. This is Acetyl-coenzyme A carboxylase carboxyl transferase subunit alpha from Acinetobacter baumannii (strain ACICU).